A 407-amino-acid chain; its full sequence is RING-H2 finger protein ATL43 (407 aa).

A signal peptide spans 1-22 (MSSSSLILLFSTLSLFLNVSLA). A helical membrane pass occupies residues 57-77 (GIAVVIAVLTAFFSLTFLLLL). Residues 146-188 (CAVCLARFEPTEVLRLLPKCKHAFHVECVDTWLDAHSTCPLCR) form an RING-type; atypical zinc finger.

The protein belongs to the RING-type zinc finger family. ATL subfamily.

The protein resides in the membrane. It carries out the reaction S-ubiquitinyl-[E2 ubiquitin-conjugating enzyme]-L-cysteine + [acceptor protein]-L-lysine = [E2 ubiquitin-conjugating enzyme]-L-cysteine + N(6)-ubiquitinyl-[acceptor protein]-L-lysine.. It functions in the pathway protein modification; protein ubiquitination. The polypeptide is RING-H2 finger protein ATL43 (ATL43) (Arabidopsis thaliana (Mouse-ear cress)).